The following is a 310-amino-acid chain: Transcriptional regulator NRG1 (310 aa).

Residues 85–131 (YYMGPPAQHRLPTPPPYPMSSPTTATAATPLSQQSPHLQPQQTLQQP) are disordered. The span at 104-131 (SSPTTATAATPLSQQSPHLQPQQTLQQP) shows a compositional bias: low complexity. 2 consecutive C2H2-type zinc fingers follow at residues 228 to 250 (HVCK…NRIH) and 256 to 280 (HQCP…YKTH).

The protein localises to the nucleus. Functionally, transcriptional repressor that binds NRG1 response elements (NRE) of target promoters. Involved in regulation of chlamydospore formation, hyphal growth, virulence, and stress response. Plays a key role in regulating true hyphal growth, but does not regulate pseudohyphal growth in the same fashion. Directs transcriptional repression of a subset of filament-specific genes such as HWP1, HYR1, ALS8, HWP1, or ECE1; via the TUP1 pathway. Functions with UME6 in a negative feedback loop to control the level and duration of filament-specific gene expression in response to inducing conditions. Plays a key role in biofilm formation and dispersion. Also plays the role of a negative regulator of virulence in mice models. Required for the expression of the cell wall genes RBR1. The protein is Transcriptional regulator NRG1 (NRG1) of Candida albicans (strain SC5314 / ATCC MYA-2876) (Yeast).